A 394-amino-acid polypeptide reads, in one-letter code: Chorismate synthase (394 aa).

Arginine 40 and arginine 46 together coordinate NADP(+). FMN contacts are provided by residues 135 to 137 (RAS) and 255 to 256 (QA). The segment at 270–291 (RRRGSGAHDEIEPAGAGSRRVR) is disordered. FMN contacts are provided by residues glycine 302, 317-321 (KPISS), and arginine 343.

Belongs to the chorismate synthase family. Homotetramer. FMNH2 is required as a cofactor.

The enzyme catalyses 5-O-(1-carboxyvinyl)-3-phosphoshikimate = chorismate + phosphate. The protein operates within metabolic intermediate biosynthesis; chorismate biosynthesis; chorismate from D-erythrose 4-phosphate and phosphoenolpyruvate: step 7/7. Catalyzes the anti-1,4-elimination of the C-3 phosphate and the C-6 proR hydrogen from 5-enolpyruvylshikimate-3-phosphate (EPSP) to yield chorismate, which is the branch point compound that serves as the starting substrate for the three terminal pathways of aromatic amino acid biosynthesis. This reaction introduces a second double bond into the aromatic ring system. This is Chorismate synthase from Frankia casuarinae (strain DSM 45818 / CECT 9043 / HFP020203 / CcI3).